The sequence spans 512 residues: DNA damage-binding protein CMR1 (512 aa).

A disordered region spans residues 32–96; the sequence is SQIKREAGVE…IPNVNDNQLL (65 aa). Residues 34–46 are compositionally biased toward basic and acidic residues; it reads IKREAGVEDEHLD. Positions 47–60 are enriched in basic residues; sequence RKRKKKAGSAKKAV. WD repeat units follow at residues 189–230, 241–281, 289–329, 333–373, 390–429, 442–481, and 482–512; these read LTAE…PEDE, LFTK…SEEI, DDPL…TEIN, LSDK…NKPE, DSRL…PEDL, GRWT…LAHL, and PTAT…FLFT.

It belongs to the WD repeat DDB2/WDR76 family.

DNA-binding protein that binds to both single- and double-stranded DNA. Binds preferentially to UV-damaged DNA. May be involved in DNA-metabolic processes. In Kluyveromyces lactis (strain ATCC 8585 / CBS 2359 / DSM 70799 / NBRC 1267 / NRRL Y-1140 / WM37) (Yeast), this protein is DNA damage-binding protein CMR1.